The sequence spans 589 residues: 3-hydroxy-3-methylglutaryl coenzyme A reductase 2-B (589 aa).

Residues 1–35 (MDVRRRPVTKTLTAGEPLKSQNQHSSSLKASDALP) are Lumenal-facing. Residues 36–56 (LPLYLTNGLFFTMFFSVMYFL) form a helical membrane-spanning segment. Topologically, residues 57–79 (LHRWREKIRNSVPLHVVTLSELA) are cytoplasmic. Residues 80–100 (ALVLLVASVIYLLGFFGIGFV) form a helical membrane-spanning segment. Residues 101 to 544 (QSLIRPSPDS…SKESPGPNSR (444 aa)) are Lumenal-facing. Asparagine 256 is a glycosylation site (N-linked (GlcNAc...) asparagine). Residue glutamate 268 is the Charge relay system of the active site. A glycan (N-linked (GlcNAc...) asparagine) is linked at asparagine 332. Active-site charge relay system residues include lysine 400 and aspartate 476. Residues 545-565 (LLASIVAGSVLAGELSLMSAL) form a helical membrane-spanning segment. Residues 566-589 (AAGQLVKSHMKFNRSSKDVSKLSS) lie on the Cytoplasmic side of the membrane. Histidine 574 functions as the Proton donor in the catalytic mechanism.

This sequence belongs to the HMG-CoA reductase family.

It is found in the endoplasmic reticulum membrane. The catalysed reaction is (R)-mevalonate + 2 NADP(+) + CoA = (3S)-3-hydroxy-3-methylglutaryl-CoA + 2 NADPH + 2 H(+). It participates in metabolic intermediate biosynthesis; (R)-mevalonate biosynthesis; (R)-mevalonate from acetyl-CoA: step 3/3. Its function is as follows. Catalyzes the synthesis of mevalonate, the specific precursor of all isoprenoid compounds present in plants. Component of the triterpene saponins (e.g. ginsenosides or panaxosides) and phytosterols biosynthetic pathways. Promotes triterpenes accumulation in roots. The protein is 3-hydroxy-3-methylglutaryl coenzyme A reductase 2-B of Panax ginseng (Korean ginseng).